The following is a 279-amino-acid chain: Phosphatidylglycerol--prolipoprotein diacylglyceryl transferase (279 aa).

3 consecutive transmembrane segments (helical) span residues 22 to 42, 52 to 72, and 89 to 109; these read WYGIIIACGILLGYFIAQAAL, LIDIIFYSAIVGFIVARIYFV, and IWHGGIAIHGGLIGGLISGII. Arg-137 serves as a coordination point for a 1,2-diacyl-sn-glycero-3-phospho-(1'-sn-glycerol). 2 consecutive transmembrane segments (helical) span residues 203–223 and 235–255; these read LGETFFGYLIWYSVGRFFVEA and IRVAQLVSVVLILISVIFVIY.

This sequence belongs to the Lgt family.

It is found in the cell membrane. It carries out the reaction L-cysteinyl-[prolipoprotein] + a 1,2-diacyl-sn-glycero-3-phospho-(1'-sn-glycerol) = an S-1,2-diacyl-sn-glyceryl-L-cysteinyl-[prolipoprotein] + sn-glycerol 1-phosphate + H(+). The protein operates within protein modification; lipoprotein biosynthesis (diacylglyceryl transfer). Catalyzes the transfer of the diacylglyceryl group from phosphatidylglycerol to the sulfhydryl group of the N-terminal cysteine of a prolipoprotein, the first step in the formation of mature lipoproteins. This is Phosphatidylglycerol--prolipoprotein diacylglyceryl transferase from Staphylococcus epidermidis (strain ATCC 12228 / FDA PCI 1200).